A 158-amino-acid polypeptide reads, in one-letter code: Cathelicidin-6 (158 aa).

The signal sequence occupies residues 1 to 29 (METQRASLSLGRWSLWLLLLGLALPSASA). Residues 30–131 (QALSYREAVL…NVTCEELQSV (102 aa)) constitute a propeptide that is removed on maturation. 2 disulfide bridges follow: C86/C97 and C108/C125.

This sequence belongs to the cathelicidin family.

It is found in the secreted. Functionally, exerts a potent antimicrobial activity against Gram-negative and Gram-positive bacteria, including methicillin-resistant Staphylococcus aureus, and fungi. The chain is Cathelicidin-6 (CATHL6) from Bos taurus (Bovine).